A 198-amino-acid polypeptide reads, in one-letter code: MQYPEPISKLIDSFMKLPGIGPKTAVRLAFFVLSMKEDVVLDFAKALVNAKRNLTYCSVCGHITDQDPCYICEDTRRDKSVICVVQDPKDVIAMEKMKEYNGLYHVLHGAISPMDGIGPEDIKIPELLKRLQDDQVTEVILATNPNIEGEATAMYISRLLKPSGIKLSRIAHGLPVGGDLEYADEVTLSKALEGRREM.

The C4-type zinc finger occupies 57–72 (CSVCGHITDQDPCYIC). Positions 80 to 175 (SVICVVQDPK…KLSRIAHGLP (96 aa)) constitute a Toprim domain.

The protein belongs to the RecR family.

Functionally, may play a role in DNA repair. It seems to be involved in an RecBC-independent recombinational process of DNA repair. It may act with RecF and RecO. This is Recombination protein RecR from Bacillus licheniformis (strain ATCC 14580 / DSM 13 / JCM 2505 / CCUG 7422 / NBRC 12200 / NCIMB 9375 / NCTC 10341 / NRRL NRS-1264 / Gibson 46).